The primary structure comprises 354 residues: 5,10-methenyltetrahydromethanopterin hydrogenase (354 aa).

Belongs to the HMD family.

It catalyses the reaction 5,10-methenyl-5,6,7,8-tetrahydromethanopterin + H2 = 5,10-methylenetetrahydromethanopterin + H(+). It functions in the pathway one-carbon metabolism; methanogenesis from CO(2); 5,10-methylene-5,6,7,8-tetrahydromethanopterin from 5,10-methenyl-5,6,7,8-tetrahydromethanopterin (hydrogen route): step 1/1. Catalyzes the reversible reduction of methenyl-H(4)MPT(+) to methylene-H(4)MPT. The protein is 5,10-methenyltetrahydromethanopterin hydrogenase of Methanococcus vannielii (strain ATCC 35089 / DSM 1224 / JCM 13029 / OCM 148 / SB).